We begin with the raw amino-acid sequence, 837 residues long: Protein translocase subunit SecA (837 aa).

Residues Gln83, 101 to 105 (GEGKT), and Asp494 each bind ATP.

The protein belongs to the SecA family. Monomer and homodimer. Part of the essential Sec protein translocation apparatus which comprises SecA, SecYEG and auxiliary proteins SecDF. Other proteins may also be involved.

The protein resides in the cell membrane. The protein localises to the cytoplasm. The enzyme catalyses ATP + H2O + cellular proteinSide 1 = ADP + phosphate + cellular proteinSide 2.. In terms of biological role, part of the Sec protein translocase complex. Interacts with the SecYEG preprotein conducting channel. Has a central role in coupling the hydrolysis of ATP to the transfer of proteins into and across the cell membrane, serving as an ATP-driven molecular motor driving the stepwise translocation of polypeptide chains across the membrane. This is Protein translocase subunit SecA from Ureaplasma parvum serovar 3 (strain ATCC 27815 / 27 / NCTC 11736).